We begin with the raw amino-acid sequence, 150 residues long: UPF0756 membrane protein Dd703_1075 (150 aa).

Transmembrane regions (helical) follow at residues Leu-8–Leu-28, Tyr-51–Gly-71, Ala-81–Gly-101, and Val-114–Val-134.

This sequence belongs to the UPF0756 family.

The protein localises to the cell membrane. The chain is UPF0756 membrane protein Dd703_1075 from Musicola paradisiaca (strain Ech703) (Dickeya paradisiaca).